A 178-amino-acid polypeptide reads, in one-letter code: MIKTLHELLKDKVPIAVLGKTHGLNGELRLFPLTNMPEVIESLEEVFIYNEKVKKLLIGRIIHMSLANGYYIVKFRGIDTLNDAKKFVGSTLYIEKSRLPILSSDEYYFYEVIGMKVYDEKGIFLGNIDEVIQTGSNDVFVINKDTKDEILIPVIKEYVLQIDKKSNKIVVKLPEWLD.

Positions 104 to 177 constitute a PRC barrel domain; that stretch reads SDEYYFYEVI…KIVVKLPEWL (74 aa).

The protein belongs to the RimM family. In terms of assembly, binds ribosomal protein uS19.

The protein resides in the cytoplasm. Its function is as follows. An accessory protein needed during the final step in the assembly of 30S ribosomal subunit, possibly for assembly of the head region. Essential for efficient processing of 16S rRNA. May be needed both before and after RbfA during the maturation of 16S rRNA. It has affinity for free ribosomal 30S subunits but not for 70S ribosomes. This chain is Ribosome maturation factor RimM, found in Thermosipho melanesiensis (strain DSM 12029 / CIP 104789 / BI429).